The chain runs to 139 residues: uncharacterized protein (139 aa).

Residues 8–139 (ANLLDHALTK…FLAIIAKLAQ (132 aa)) form the HTH marR-type domain. The segment at residues 53–76 (IKDILKEVTLSPSATTTALNHLEQ) is a DNA-binding region (H-T-H motif).

This is an uncharacterized protein from Bacillus subtilis (strain 168).